Consider the following 242-residue polypeptide: Small ribosomal subunit protein uS2 (242 aa).

The protein belongs to the universal ribosomal protein uS2 family.

The sequence is that of Small ribosomal subunit protein uS2 from Tolumonas auensis (strain DSM 9187 / NBRC 110442 / TA 4).